A 128-amino-acid polypeptide reads, in one-letter code: Glycine cleavage system H protein (128 aa).

The Lipoyl-binding domain occupies 22–104 (TVLVGITDYA…YGEGWIFRLK (83 aa)). Residue K63 is modified to N6-lipoyllysine.

Belongs to the GcvH family. As to quaternary structure, the glycine cleavage system is composed of four proteins: P, T, L and H. Monomer. The cofactor is (R)-lipoate.

Its function is as follows. The glycine cleavage system catalyzes the degradation of glycine. The H protein shuttles the methylamine group of glycine from the P protein to the T protein. This is Glycine cleavage system H protein from Thermus thermophilus (strain ATCC 27634 / DSM 579 / HB8).